The primary structure comprises 487 residues: Argininosuccinate lyase (487 aa).

This sequence belongs to the lyase 1 family. Argininosuccinate lyase subfamily.

Its subcellular location is the cytoplasm. It carries out the reaction 2-(N(omega)-L-arginino)succinate = fumarate + L-arginine. It participates in amino-acid biosynthesis; L-arginine biosynthesis; L-arginine from L-ornithine and carbamoyl phosphate: step 3/3. This Methanococcus aeolicus (strain ATCC BAA-1280 / DSM 17508 / OCM 812 / Nankai-3) protein is Argininosuccinate lyase.